Consider the following 68-residue polypeptide: UPF0253 protein AHA_2115 (68 aa).

The protein belongs to the UPF0253 family.

This is UPF0253 protein AHA_2115 from Aeromonas hydrophila subsp. hydrophila (strain ATCC 7966 / DSM 30187 / BCRC 13018 / CCUG 14551 / JCM 1027 / KCTC 2358 / NCIMB 9240 / NCTC 8049).